The primary structure comprises 904 residues: Toll-like receptor 3 (904 aa).

Residues 1 to 26 (MSRPLPYHIYFFTGLLTCWILCTSSA) form the signal peptide. One can recognise an LRRNT domain in the interval 27 to 52 (HKCTVRHEVADCSHLKLTQIPEDLPT). Topologically, residues 27 to 705 (HKCTVRHEVA…PCKDSAPFEL (679 aa)) are lumenal. A disulfide bond links C29 and C38. 3 N-linked (GlcNAc...) asparagine glycosylation sites follow: N53, N58, and N71. LRR repeat units follow at residues 53–74 (NITV…NFTR), 77–98 (RLTI…LCQN), 101–122 (WLEI…TFVF), 125–146 (NLTE…PFKN), 149–170 (NLIK…TQLQ), and 173–196 (NLQE…DFLG). Residues C96 and C123 are joined by a disulfide bond. N125 is a glycosylation site (N-linked (GlcNAc...) asparagine). N-linked (GlcNAc...) asparagine glycosylation is present at N197. 2 LRR repeats span residues 199 to 220 (SLER…CFHA) and 223 to 245 (KLSG…LCLE). N248, N253, N276, and N292 each carry an N-linked (GlcNAc...) asparagine glycan. LRR repeat units lie at residues 250-271 (SIEN…TFSG), 276-297 (NLTT…SFAW), 300-321 (HLEY…SFYG), 324-345 (NLRH…TSLP), 357-378 (CLEY…TFTG), 381-401 (RLKF…TNET), 409-430 (PLLL…AFSW), 433-455 (HLEV…EWRG), 466-487 (YNKY…QRLM), 508-529 (NLVI…LLKG), 532-553 (KLEI…ANPG), 564-585 (HLRI…AFKD), 588-609 (ELKS…VFDN), and 612-633 (SLKS…VFGP). N399 and N414 each carry an N-linked (GlcNAc...) asparagine glycan. N-linked (GlcNAc...) asparagine glycosylation is found at N637, N663, and N668. Residues 646-699 (NPFDCTCESIAWFVNWINSTHTNISELSNHYLCNTPPQYHGFPVMLFDVSPCKD) form the LRRCT domain. Intrachain disulfides connect C650–C678 and C652–C697. Residues 706–726 (LFMINTNILLIFIFIVLLIHF) traverse the membrane as a helical segment. Residues 727 to 904 (EGWRISFYWN…VALGSRNSAH (178 aa)) are Cytoplasmic-facing. The TIR domain occupies 754-897 (FEYAAYIIHA…AFHHKLKVAL (144 aa)). Y759 bears the Phosphotyrosine mark. Residues K812 and K831 each participate in a glycyl lysine isopeptide (Lys-Gly) (interchain with G-Cter in ubiquitin) cross-link. Residue Y858 is modified to Phosphotyrosine.

This sequence belongs to the Toll-like receptor family. Monomer and homodimer; dimerization is triggered by ligand-binding and is required for TLR3 signaling. Interacts (via transmembrane domain) with UNC93B1. Interacts with TICAM1 (via the TIR domain) in response to poly(I:C) and this interaction is enhanced the presence of WDFY1. Interacts with SRC; upon binding of double-stranded RNA. The tyrosine-phosphorylated form (via TIR domain) interacts with WDFY1 (via WD repeat 2) in response to poly(I:C). In terms of processing, ubiquitinated by TRIM3; leading to recognition and sorting of polyubiquitinated TLR3 by the ESCRT complexes. Ubiquitinated by ZNRF1 via 'Lys-63'-linked ubiquitin chains; leading to TLR3 lysosomal trafficking and degradation.

The protein localises to the endoplasmic reticulum membrane. It is found in the endosome membrane. The protein resides in the early endosome. Key component of innate and adaptive immunity. TLRs (Toll-like receptors) control host immune response against pathogens through recognition of molecular patterns specific to microorganisms. TLR3 is a nucleotide-sensing TLR which is activated by double-stranded RNA, a sign of viral infection. Acts via the adapter TRIF/TICAM1, leading to NF-kappa-B activation, cytokine secretion and the inflammatory response. The polypeptide is Toll-like receptor 3 (TLR3) (Boselaphus tragocamelus (Nilgai)).